The following is a 191-amino-acid chain: Molybdenum cofactor guanylyltransferase (191 aa).

Residues 13-15 (LAG), Lys-26, Asp-72, and Asp-102 contribute to the GTP site. A Mg(2+)-binding site is contributed by Asp-102.

The protein belongs to the MobA family. Monomer. Mg(2+) serves as cofactor.

It localises to the cytoplasm. It catalyses the reaction Mo-molybdopterin + GTP + H(+) = Mo-molybdopterin guanine dinucleotide + diphosphate. Transfers a GMP moiety from GTP to Mo-molybdopterin (Mo-MPT) cofactor (Moco or molybdenum cofactor) to form Mo-molybdopterin guanine dinucleotide (Mo-MGD) cofactor. The polypeptide is Molybdenum cofactor guanylyltransferase (Pseudomonas entomophila (strain L48)).